Here is a 529-residue protein sequence, read N- to C-terminus: Probable cytochrome P450 6t1 (529 aa).

Cys-472 serves as a coordination point for heme.

Belongs to the cytochrome P450 family. Requires heme as cofactor.

It is found in the endoplasmic reticulum membrane. Its subcellular location is the microsome membrane. Its function is as follows. May be involved in the metabolism of insect hormones and in the breakdown of synthetic insecticides. The chain is Probable cytochrome P450 6t1 (Cyp6t1) from Drosophila melanogaster (Fruit fly).